A 400-amino-acid chain; its full sequence is MTYQAPDENGFYGKFGGRFVPETLMKAVKELDEAYRASKTDPAFQKELNYYLKEYVGRETPLYFAEQLTAHAGGAKIYLKREDLNHTGAHKINNTIGQALLARQMGKQKVVAETGAGQHGVATATVAALFNMECTIFMGEEDVKRQSLNVFRMELLGAKVVSVKAGSRTLKDAVNEALRFWVANVEDTHYIMGSVLGPHPFPEIVRDYQSVIGIEARKQHLEKEGKLPDAIVACVGGGSNAMGLFYPFVDDVSVQMHGVEAAGHGLETEFHAATISKGEIGILHGAMMDVLQDENGQILEAFSISAGLDYPGIGPEHSFFRDLGRAAYHSVTDDEAVEAFQLLCRTEGIIPALESSHAISYAVKLASQMRPEESMVVCLSGRGDKDVNQLKERLEGQIND.

K91 is subject to N6-(pyridoxal phosphate)lysine.

Belongs to the TrpB family. In terms of assembly, tetramer of two alpha and two beta chains. Pyridoxal 5'-phosphate serves as cofactor.

The enzyme catalyses (1S,2R)-1-C-(indol-3-yl)glycerol 3-phosphate + L-serine = D-glyceraldehyde 3-phosphate + L-tryptophan + H2O. It functions in the pathway amino-acid biosynthesis; L-tryptophan biosynthesis; L-tryptophan from chorismate: step 5/5. The beta subunit is responsible for the synthesis of L-tryptophan from indole and L-serine. The chain is Tryptophan synthase beta chain from Listeria monocytogenes serotype 4b (strain CLIP80459).